Here is a 670-residue protein sequence, read N- to C-terminus: Acetyl-coenzyme A synthetase (670 aa).

CoA contacts are provided by residues 211-214 (RGGK) and T329. Residues 404–406 (GEP), 428–433 (DTYWQT), D519, and R534 contribute to the ATP site. Residue S542 participates in CoA binding. R545 contributes to the ATP binding site. R603 is a binding site for CoA.

Belongs to the ATP-dependent AMP-binding enzyme family.

The catalysed reaction is acetate + ATP + CoA = acetyl-CoA + AMP + diphosphate. This chain is Acetyl-coenzyme A synthetase (facA), found in Emericella nidulans (strain FGSC A4 / ATCC 38163 / CBS 112.46 / NRRL 194 / M139) (Aspergillus nidulans).